We begin with the raw amino-acid sequence, 316 residues long: Probable cell division protein WhiA (316 aa).

Positions 280–313 form a DNA-binding region, H-T-H motif; sequence SLKELGEMLEPPVGKSGVNHRLRKIEKIAEELRT.

This sequence belongs to the WhiA family.

In terms of biological role, involved in cell division and chromosome segregation. The sequence is that of Probable cell division protein WhiA from Clostridium perfringens (strain 13 / Type A).